The chain runs to 85 residues: Elicitor peptide 7 (85 aa).

A propeptide spanning residues 1–62 (MEGEGRREDG…TEVVNIPRSV (62 aa)) is cleaved from the precursor. Residues 66 to 85 (NVAARKGKQQTSSGKGGGTN) are disordered.

The protein belongs to the brassicaceae elicitor peptide family.

Elicitor of plant defense. This is Elicitor peptide 7 (PEP7) from Arabidopsis thaliana (Mouse-ear cress).